A 319-amino-acid polypeptide reads, in one-letter code: Acetyl-coenzyme A carboxylase carboxyl transferase subunit alpha (319 aa).

Positions 36 to 293 constitute a CoA carboxyltransferase C-terminal domain; that stretch reads EVERLKTKLE…HDAFLSELDR (258 aa).

This sequence belongs to the AccA family. In terms of assembly, acetyl-CoA carboxylase is a heterohexamer composed of biotin carboxyl carrier protein (AccB), biotin carboxylase (AccC) and two subunits each of ACCase subunit alpha (AccA) and ACCase subunit beta (AccD).

The protein localises to the cytoplasm. The enzyme catalyses N(6)-carboxybiotinyl-L-lysyl-[protein] + acetyl-CoA = N(6)-biotinyl-L-lysyl-[protein] + malonyl-CoA. The protein operates within lipid metabolism; malonyl-CoA biosynthesis; malonyl-CoA from acetyl-CoA: step 1/1. Functionally, component of the acetyl coenzyme A carboxylase (ACC) complex. First, biotin carboxylase catalyzes the carboxylation of biotin on its carrier protein (BCCP) and then the CO(2) group is transferred by the carboxyltransferase to acetyl-CoA to form malonyl-CoA. This Dichelobacter nodosus (strain VCS1703A) protein is Acetyl-coenzyme A carboxylase carboxyl transferase subunit alpha.